We begin with the raw amino-acid sequence, 579 residues long: Pre-mRNA-processing protein 45 (579 aa).

4 disordered regions span residues 1–64, 218–254, 343–414, and 521–579; these read MTSV…GWRP, QQDPMEPPKFKHKKIPRGPPSPPPPIMHSPPRKLTAE, QKAR…TERR, and AAEA…VDDD. Residues 234–245 are compositionally biased toward pro residues; it reads RGPPSPPPPIMH. Residues 343–359 are compositionally biased toward basic and acidic residues; that stretch reads QKAREERAASNRRDSRA. Over residues 366-379 the composition is skewed to low complexity; it reads ASRSPSAYSRSATP. 3 stretches are compositionally biased toward basic and acidic residues: residues 386 to 414, 521 to 538, and 563 to 579; these read ARERERIRRERRQDAERQLRQSRMGTERR, AAEAEARDGPVQFEKDTT, and EVEREDRGSKRARVDDD.

Belongs to the SNW family. As to quaternary structure, associated with the spliceosome.

Its subcellular location is the nucleus. Involved in pre-mRNA splicing. The sequence is that of Pre-mRNA-processing protein 45 (prp45) from Aspergillus fumigatus (strain ATCC MYA-4609 / CBS 101355 / FGSC A1100 / Af293) (Neosartorya fumigata).